Consider the following 287-residue polypeptide: Hydroxysteroid 11-beta-dehydrogenase 1-like protein (287 aa).

The first 15 residues, M1–A15, serve as a signal peptide directing secretion. NADP(+)-binding positions include G36–T62, D87–M88, and N114–I116. Substrate is bound at residue S165. Catalysis depends on Y178, which acts as the Proton acceptor. NADP(+) is bound by residues Y178 to K182 and G211 to S217.

This sequence belongs to the short-chain dehydrogenases/reductases (SDR) family.

The protein resides in the secreted. The enzyme catalyses cortisone + NADPH + H(+) = cortisol + NADP(+). Its function is as follows. Unidirectional NADP(+)-dependent cortisol dehydrogenase (in vitro). This Macaca fascicularis (Crab-eating macaque) protein is Hydroxysteroid 11-beta-dehydrogenase 1-like protein (HSD11B1L).